Here is a 176-residue protein sequence, read N- to C-terminus: MTLQPNLQAKEMELSLVGLQNSGKTSLVNVVATGEYSEDMIPTVGFNMRKVTKENVAIRLWDLGGQPRFRCMWERYCRAVSMIVYVVDAADTENLSVSRSELHDLLSNASLIGIPLLVLGNKIDIHGALSKEALTEEMGLSSVTSREVCCLMISCKNPTTIDQLTDWLVNHSKSKN.

GTP contacts are provided by residues 21-26, 40-43, 62-66, and 121-124; these read NSGKTS, MIPT, DLGGQ, and NKID.

Belongs to the small GTPase superfamily. Arf family. In terms of assembly, interacts with tubulin.

It is found in the late endosome membrane. The protein resides in the lysosome membrane. It localises to the cytoplasm. The protein localises to the cytoskeleton. Its subcellular location is the spindle. In terms of biological role, may play a role in lysosome motility. May play a role in chromosome segregation. The polypeptide is ADP-ribosylation factor-like protein 8d (Arabidopsis thaliana (Mouse-ear cress)).